Reading from the N-terminus, the 68-residue chain is DNA-directed RNA polymerase subunit omega (68 aa).

This sequence belongs to the RNA polymerase subunit omega family. As to quaternary structure, the RNAP catalytic core consists of 2 alpha, 1 beta, 1 beta' and 1 omega subunit. When a sigma factor is associated with the core the holoenzyme is formed, which can initiate transcription.

The catalysed reaction is RNA(n) + a ribonucleoside 5'-triphosphate = RNA(n+1) + diphosphate. In terms of biological role, promotes RNA polymerase assembly. Latches the N- and C-terminal regions of the beta' subunit thereby facilitating its interaction with the beta and alpha subunits. This chain is DNA-directed RNA polymerase subunit omega, found in Brevibacillus brevis (strain 47 / JCM 6285 / NBRC 100599).